The following is a 333-amino-acid chain: MTITTRHDWTTEEIQTLLELPLMDLLWQAQTVHRDANPGYRVQLASLLSVKTGGCEEDCSYCSQSIHNSSDVSGFEAQMRVEPVLERARAAKEAGADRFCMGWAWREIRDGAQFEAMLEMVRGVRGMGMEACVTAGMLTDDQAGRLAEAGLTAYNHNLDTSPEHYEKIISTRTYEDRLETLQRVRKAGVTLCSGGIIGMGETLRDRASMLQVLASMNPHPESVPVNGLVAVEGTPLEEQQPFEPLELVRMVATARILMPHARVRLSAGREQLSREAQILCLQAGADSIFYGDLLLTTGNPDVEADRRLLADAGVQANWQENASSLAIKAPAST.

Residues 40 to 269 (YRVQLASLLS…HARVRLSAGR (230 aa)) enclose the Radical SAM core domain. Residues C55, C59, and C62 each contribute to the [4Fe-4S] cluster site. Residues C100, C132, C192, and R264 each coordinate [2Fe-2S] cluster.

The protein belongs to the radical SAM superfamily. Biotin synthase family. In terms of assembly, homodimer. It depends on [4Fe-4S] cluster as a cofactor. [2Fe-2S] cluster is required as a cofactor.

It carries out the reaction (4R,5S)-dethiobiotin + (sulfur carrier)-SH + 2 reduced [2Fe-2S]-[ferredoxin] + 2 S-adenosyl-L-methionine = (sulfur carrier)-H + biotin + 2 5'-deoxyadenosine + 2 L-methionine + 2 oxidized [2Fe-2S]-[ferredoxin]. It participates in cofactor biosynthesis; biotin biosynthesis; biotin from 7,8-diaminononanoate: step 2/2. Functionally, catalyzes the conversion of dethiobiotin (DTB) to biotin by the insertion of a sulfur atom into dethiobiotin via a radical-based mechanism. The chain is Biotin synthase from Synechococcus sp. (strain CC9902).